The primary structure comprises 298 residues: ADP/ATP translocase 1 (298 aa).

Residues 1 to 7 are Mitochondrial intermembrane-facing; sequence MGDQALS. Glycine 2 is subject to N-acetylglycine. The Solcar 1 repeat unit spans residues 6–98; the sequence is LSFLKDFLAG…FAFKDKYKQI (93 aa). Serine 7 carries the phosphoserine modification. The chain crosses the membrane as a helical span at residues 8 to 37; it reads FLKDFLAGGIAAAVSKTAVAPIERVKLLLQ. Residues 38–74 lie on the Mitochondrial matrix side of the membrane; the sequence is VQHASKQISAEKQYKGIIDCVVRIPKEQGFLSFWRGN. Lysine 52 bears the N6,N6,N6-trimethyllysine mark. A helical membrane pass occupies residues 75–99; sequence LANVIRYFPTQALNFAFKDKYKQIF. Residues arginine 80 and lysine 92 each coordinate ADP. Topologically, residues 100-109 are mitochondrial intermembrane; it reads LGGVDRHKQF. The chain crosses the membrane as a helical span at residues 110 to 130; sequence WRYFAGNLASGGAAGATSLCF. 2 Solcar repeats span residues 111-201 and 212-297; these read RYFA…AKGM and VSWM…IKKY. The Mitochondrial matrix portion of the chain corresponds to 131–178; the sequence is VYPLDFARTRLAADVGKGSSQREFNGLGDCLTKIFKSDGLKGLYQGFS. At lysine 147 the chain carries N6-succinyllysine. 2 positions are modified to phosphoserine: serine 149 and serine 150. Cysteine 160 is subject to S-nitrosocysteine. A helical transmembrane segment spans residues 179–199; the sequence is VSVQGIIIYRAAYFGVYDTAK. Residues 200 to 210 lie on the Mitochondrial intermembrane side of the membrane; it reads GMLPDPKNVHI. The chain crosses the membrane as a helical span at residues 211–231; it reads IVSWMIAQSVTAVAGLVSYPF. The Mitochondrial matrix segment spans residues 232–273; it reads DTVRRRMMMQSGRKGADIMYTGTVDCWRKIAKDEGRKAFFKG. Residue arginine 235 participates in ADP binding. Residues 235 to 240 are important for transport activity; sequence RRRMMM. The Nucleotide carrier signature motif signature appears at 235–240; the sequence is RRRMMM. 2 positions are modified to N6-succinyllysine: lysine 245 and lysine 272. A helical membrane pass occupies residues 274–291; that stretch reads AWSNVLRGMGGAFVLVLY. Over 292 to 298 the chain is Mitochondrial intermembrane; it reads DEIKKYV.

It belongs to the mitochondrial carrier (TC 2.A.29) family. As to quaternary structure, monomer. Found in a complex with ARL2, ARL2BP and SLC25A4/ANT1. Interacts with ARL2BP. Interacts with TIMM44; leading to inhibit the presequence translocase TIMM23, thereby promoting stabilization of PINK1. Post-translationally, under cell death induction, transglutaminated by TGM2. Transglutamination leads to formation of covalent cross-links between a glutamine and the epsilon-amino group of a lysine residue, forming polymers.

Its subcellular location is the mitochondrion inner membrane. The protein localises to the membrane. It carries out the reaction ADP(in) + ATP(out) = ADP(out) + ATP(in). The catalysed reaction is H(+)(in) = H(+)(out). The matrix-open state (m-state) is inhibited by the membrane-permeable bongkrekic acid (BKA). The cytoplasmic-open state (c-state) is inhibited by the membrane-impermeable toxic inhibitor carboxyatractyloside (CATR). Proton transporter activity is inhibited by ADP:ATP antiporter activity. Functionally, ADP:ATP antiporter that mediates import of ADP into the mitochondrial matrix for ATP synthesis, and export of ATP out to fuel the cell. Cycles between the cytoplasmic-open state (c-state) and the matrix-open state (m-state): operates by the alternating access mechanism with a single substrate-binding site intermittently exposed to either the cytosolic (c-state) or matrix (m-state) side of the inner mitochondrial membrane. In addition to its ADP:ATP antiporter activity, also involved in mitochondrial uncoupling and mitochondrial permeability transition pore (mPTP) activity. Plays a role in mitochondrial uncoupling by acting as a proton transporter: proton transport uncouples the proton flows via the electron transport chain and ATP synthase to reduce the efficiency of ATP production and cause mitochondrial thermogenesis. Proton transporter activity is inhibited by ADP:ATP antiporter activity, suggesting that SLC25A4/ANT1 acts as a master regulator of mitochondrial energy output by maintaining a delicate balance between ATP production (ADP:ATP antiporter activity) and thermogenesis (proton transporter activity). Proton transporter activity requires free fatty acids as cofactor, but does not transport it. Also plays a key role in mPTP opening, a non-specific pore that enables free passage of the mitochondrial membranes to solutes of up to 1.5 kDa, and which contributes to cell death. It is however unclear if SLC25A4/ANT1 constitutes a pore-forming component of mPTP or regulates it. Acts as a regulator of mitophagy independently of ADP:ATP antiporter activity: promotes mitophagy via interaction with TIMM44, leading to inhibit the presequence translocase TIMM23, thereby promoting stabilization of PINK1. The chain is ADP/ATP translocase 1 from Rattus norvegicus (Rat).